We begin with the raw amino-acid sequence, 105 residues long: Nitrogenase-stabilizing/protective protein NifW 2 (105 aa).

It belongs to the NifW family.

Functionally, may protect the nitrogenase Fe-Mo protein from oxidative damage. This chain is Nitrogenase-stabilizing/protective protein NifW 2 (nifW2), found in Trichormus variabilis (strain ATCC 29413 / PCC 7937) (Anabaena variabilis).